Reading from the N-terminus, the 185-residue chain is ATP synthase subunit b 2 (185 aa).

Residues 1-23 (MAEGHGDAKGATAHTAADGGHKA) are disordered. Low complexity predominate over residues 9-18 (KGATAHTAAD). A helical transmembrane segment spans residues 37-57 (LVSLTIAFVALYLIVSKIILP).

This sequence belongs to the ATPase B chain family. As to quaternary structure, F-type ATPases have 2 components, F(1) - the catalytic core - and F(0) - the membrane proton channel. F(1) has five subunits: alpha(3), beta(3), gamma(1), delta(1), epsilon(1). F(0) has three main subunits: a(1), b(2) and c(10-14). The alpha and beta chains form an alternating ring which encloses part of the gamma chain. F(1) is attached to F(0) by a central stalk formed by the gamma and epsilon chains, while a peripheral stalk is formed by the delta and b chains.

The protein localises to the cell inner membrane. Functionally, f(1)F(0) ATP synthase produces ATP from ADP in the presence of a proton or sodium gradient. F-type ATPases consist of two structural domains, F(1) containing the extramembraneous catalytic core and F(0) containing the membrane proton channel, linked together by a central stalk and a peripheral stalk. During catalysis, ATP synthesis in the catalytic domain of F(1) is coupled via a rotary mechanism of the central stalk subunits to proton translocation. Component of the F(0) channel, it forms part of the peripheral stalk, linking F(1) to F(0). The b'-subunit is a diverged and duplicated form of b found in plants and photosynthetic bacteria. This is ATP synthase subunit b 2 (atpF2) from Rhodopseudomonas palustris (strain BisB5).